Reading from the N-terminus, the 262-residue chain is Adenosylcobinamide-GDP ribazoletransferase (262 aa).

5 helical membrane-spanning segments follow: residues 41–63 (AFPF…LMAL), 68–85 (LFAA…TGAL), 115–134 (IGTY…VSAF), 141–163 (FSPL…AMVW), and 201–221 (LLFY…VAFL).

Belongs to the CobS family. As to quaternary structure, associated with a large complex of proteins. It depends on Mg(2+) as a cofactor.

It is found in the cell inner membrane. The enzyme catalyses alpha-ribazole + adenosylcob(III)inamide-GDP = adenosylcob(III)alamin + GMP + H(+). The catalysed reaction is alpha-ribazole 5'-phosphate + adenosylcob(III)inamide-GDP = adenosylcob(III)alamin 5'-phosphate + GMP + H(+). It functions in the pathway cofactor biosynthesis; adenosylcobalamin biosynthesis; adenosylcobalamin from cob(II)yrinate a,c-diamide: step 7/7. In terms of biological role, joins adenosylcobinamide-GDP and alpha-ribazole to generate adenosylcobalamin (Ado-cobalamin). Also synthesizes adenosylcobalamin 5'-phosphate from adenosylcobinamide-GDP and alpha-ribazole 5'-phosphate. The chain is Adenosylcobinamide-GDP ribazoletransferase (cobV) from Sinorhizobium sp.